A 396-amino-acid polypeptide reads, in one-letter code: Acetate kinase (396 aa).

Asparagine 8 is a binding site for Mg(2+). Lysine 15 is an ATP binding site. A substrate-binding site is contributed by arginine 90. Aspartate 147 functions as the Proton donor/acceptor in the catalytic mechanism. ATP is bound by residues 207-211, 283-285, and 330-334; these read HLGSG, DMR, and GIGEN. Glutamate 384 is a binding site for Mg(2+).

The protein belongs to the acetokinase family. As to quaternary structure, homodimer. Mg(2+) serves as cofactor. Requires Mn(2+) as cofactor.

The protein resides in the cytoplasm. It catalyses the reaction acetate + ATP = acetyl phosphate + ADP. Its pathway is metabolic intermediate biosynthesis; acetyl-CoA biosynthesis; acetyl-CoA from acetate: step 1/2. In terms of biological role, catalyzes the formation of acetyl phosphate from acetate and ATP. Can also catalyze the reverse reaction. The protein is Acetate kinase of Lacticaseibacillus paracasei (strain ATCC 334 / BCRC 17002 / CCUG 31169 / CIP 107868 / KCTC 3260 / NRRL B-441) (Lactobacillus paracasei).